The primary structure comprises 65 residues: Large ribosomal subunit protein bL35 (65 aa).

This sequence belongs to the bacterial ribosomal protein bL35 family.

This is Large ribosomal subunit protein bL35 from Synechococcus sp. (strain CC9311).